A 595-amino-acid polypeptide reads, in one-letter code: S-(+)-linalool synthase, chloroplastic (595 aa).

A chloroplast-targeting transit peptide spans 1-46; it reads MVCHVFSSFSSSLIRVLEAPLLLPAASASSSSSSSPASRSGGRRRR. Residues 27 to 40 are compositionally biased toward low complexity; sequence SASSSSSSSPASRS. The disordered stretch occupies residues 27-54; sequence SASSSSSSSPASRSGGRRRRAAHVRPSP. Residues Arg-309, Asp-346, Asp-350, Arg-487, and Asp-490 each coordinate (2E)-geranyl diphosphate. Mg(2+) contacts are provided by Asp-346 and Asp-350. The short motif at 346–350 is the DDXXD motif element; sequence DDIFD. Residues Asp-490, Ser-494, and Glu-498 each coordinate Mg(2+).

It belongs to the terpene synthase family. Tpsb subfamily. The cofactor is Mg(2+). Requires Mn(2+) as cofactor.

The protein resides in the plastid. Its subcellular location is the chloroplast. It catalyses the reaction (2E)-geranyl diphosphate + H2O = (S)-linalool + diphosphate. Its pathway is secondary metabolite biosynthesis; terpenoid biosynthesis. Involved in monoterpene (C10) biosynthesis. The major product is S-(+)-linalool. Linalool production is induced by jasmonate in response to pathogen attack, it possesses antibacterial activity and is important for resistance to the bacterial blight pathogen Xanthomonas oryzae pv. oryzae (Xoo). Plants over-expressing linalool synthase display enhanced resistance to Xoo. This chain is S-(+)-linalool synthase, chloroplastic, found in Oryza sativa subsp. japonica (Rice).